The chain runs to 226 residues: Gap junction beta-2 protein (226 aa).

The stretch at 2-13 (DWGALQTILGGV) is an intramembrane region. Over 14–20 (NKHSTSI) the chain is Cytoplasmic. A helical membrane pass occupies residues 21 to 40 (GKIWLTVLFIFRIMILVVAA). Topologically, residues 41–73 (KEVWGDEQADFVCNTLQPGCKNVCYDHYFPISH) are extracellular. Glu42, Gly45, and Glu47 together coordinate Ca(2+). Cystine bridges form between Cys53/Cys180, Cys60/Cys174, and Cys64/Cys169. Residues 74–94 (IRLWALQLIFVSTPALLVAMH) traverse the membrane as a helical segment. Residues 95-135 (VAYRRHEKKRKFIKGEIKSEFKDIEEIKTQKVRIEGSLWWT) are Cytoplasmic-facing. The chain crosses the membrane as a helical span at residues 136 to 156 (YTSSIFFRVIFEAAFMYVFYV). The Extracellular segment spans residues 157–189 (MYDGFSMQRLVKCNAWPCPNTVDCFVSRPTEKT). Residues 190–210 (VFTVFMIAVSGICILLNVTEL) form a helical membrane-spanning segment. Residues 211–226 (CYLLIRYCSGRSKKPV) are Cytoplasmic-facing.

The protein belongs to the connexin family. Beta-type (group I) subfamily. A hemichannel or connexon is composed of a hexamer of connexins. A functional gap junction is formed by the apposition of two hemichannels. Forms heteromeric channels with GJB4. Interacts with CNST.

It is found in the cell membrane. The protein resides in the cell junction. Its subcellular location is the gap junction. Structural component of gap junctions. Gap junctions are dodecameric channels that connect the cytoplasm of adjoining cells. They are formed by the docking of two hexameric hemichannels, one from each cell membrane. Small molecules and ions diffuse from one cell to a neighboring cell via the central pore. This chain is Gap junction beta-2 protein (GJB2), found in Pongo pygmaeus (Bornean orangutan).